A 443-amino-acid chain; its full sequence is Ribosomal protein uS12 methylthiotransferase RimO (443 aa).

One can recognise an MTTase N-terminal domain in the interval 10-120 (PRVGFVSLGC…VMAAVHAQCP (111 aa)). [4Fe-4S] cluster-binding residues include C19, C55, C84, C152, C156, and C159. The Radical SAM core domain occupies 138–375 (LTPRHYAYLK…MALQAEISAR (238 aa)). The 66-residue stretch at 378-443 (ARRVGTECTV…DEHDLYGRVL (66 aa)) folds into the TRAM domain.

This sequence belongs to the methylthiotransferase family. RimO subfamily. [4Fe-4S] cluster is required as a cofactor.

The protein localises to the cytoplasm. It carries out the reaction L-aspartate(89)-[ribosomal protein uS12]-hydrogen + (sulfur carrier)-SH + AH2 + 2 S-adenosyl-L-methionine = 3-methylsulfanyl-L-aspartate(89)-[ribosomal protein uS12]-hydrogen + (sulfur carrier)-H + 5'-deoxyadenosine + L-methionine + A + S-adenosyl-L-homocysteine + 2 H(+). Functionally, catalyzes the methylthiolation of an aspartic acid residue of ribosomal protein uS12. The polypeptide is Ribosomal protein uS12 methylthiotransferase RimO (Alkalilimnicola ehrlichii (strain ATCC BAA-1101 / DSM 17681 / MLHE-1)).